Consider the following 453-residue polypeptide: uncharacterized protein (453 aa).

4 residues coordinate [4Fe-4S] cluster: Cys74, Cys80, Cys83, and Cys162. S-adenosyl-L-methionine is bound by residues Gln286, Tyr315, Glu336, and Asp384. The active-site Nucleophile is the Cys411.

It belongs to the class I-like SAM-binding methyltransferase superfamily. RNA M5U methyltransferase family.

This is an uncharacterized protein from Staphylococcus aureus (strain COL).